Consider the following 254-residue polypeptide: Imidazole glycerol phosphate synthase subunit HisF (254 aa).

Catalysis depends on residues Asp12 and Asp131.

This sequence belongs to the HisA/HisF family. As to quaternary structure, heterodimer of HisH and HisF.

It localises to the cytoplasm. The enzyme catalyses 5-[(5-phospho-1-deoxy-D-ribulos-1-ylimino)methylamino]-1-(5-phospho-beta-D-ribosyl)imidazole-4-carboxamide + L-glutamine = D-erythro-1-(imidazol-4-yl)glycerol 3-phosphate + 5-amino-1-(5-phospho-beta-D-ribosyl)imidazole-4-carboxamide + L-glutamate + H(+). Its pathway is amino-acid biosynthesis; L-histidine biosynthesis; L-histidine from 5-phospho-alpha-D-ribose 1-diphosphate: step 5/9. IGPS catalyzes the conversion of PRFAR and glutamine to IGP, AICAR and glutamate. The HisF subunit catalyzes the cyclization activity that produces IGP and AICAR from PRFAR using the ammonia provided by the HisH subunit. The polypeptide is Imidazole glycerol phosphate synthase subunit HisF (Leifsonia xyli subsp. xyli (strain CTCB07)).